The chain runs to 188 residues: Ribonuclease HII (188 aa).

Residues 6-188 (KPLCGIDEAG…VKGLDEPTLF (183 aa)) enclose the RNase H type-2 domain. Residues aspartate 12, glutamate 13, and aspartate 99 each contribute to the a divalent metal cation site.

The protein belongs to the RNase HII family. The cofactor is Mn(2+). Mg(2+) is required as a cofactor.

It is found in the cytoplasm. The enzyme catalyses Endonucleolytic cleavage to 5'-phosphomonoester.. Its function is as follows. Endonuclease that specifically degrades the RNA of RNA-DNA hybrids. The chain is Ribonuclease HII from Sulfurovum sp. (strain NBC37-1).